Consider the following 203-residue polypeptide: Outer-membrane lipoprotein carrier protein (203 aa).

An N-terminal signal peptide occupies residues 1–21 (MKKLLVACCLLSGLISAHALA).

The protein belongs to the LolA family. As to quaternary structure, monomer.

The protein localises to the periplasm. Functionally, participates in the translocation of lipoproteins from the inner membrane to the outer membrane. Only forms a complex with a lipoprotein if the residue after the N-terminal Cys is not an aspartate (The Asp acts as a targeting signal to indicate that the lipoprotein should stay in the inner membrane). This chain is Outer-membrane lipoprotein carrier protein, found in Yersinia enterocolitica serotype O:8 / biotype 1B (strain NCTC 13174 / 8081).